Here is a 693-residue protein sequence, read N- to C-terminus: Elongation factor G (693 aa).

The 275-residue stretch at 8–282 (EKTRNIGIMA…AVIDYLPSPL (275 aa)) folds into the tr-type G domain. GTP is bound by residues 17-24 (AHVDAGKT), 81-85 (DTPGH), and 135-138 (NKMD).

This sequence belongs to the TRAFAC class translation factor GTPase superfamily. Classic translation factor GTPase family. EF-G/EF-2 subfamily.

The protein localises to the cytoplasm. Functionally, catalyzes the GTP-dependent ribosomal translocation step during translation elongation. During this step, the ribosome changes from the pre-translocational (PRE) to the post-translocational (POST) state as the newly formed A-site-bound peptidyl-tRNA and P-site-bound deacylated tRNA move to the P and E sites, respectively. Catalyzes the coordinated movement of the two tRNA molecules, the mRNA and conformational changes in the ribosome. The sequence is that of Elongation factor G from Streptococcus pneumoniae (strain Hungary19A-6).